The chain runs to 688 residues: NADPH-dependent diflavin oxidoreductase 1 (688 aa).

A disordered region spans residues 26–76; the sequence is HLHRHADTSPTNQHNTSHKMTTTEPIHVTTGSGESRDHTEPRHVTPTSPNA. Residues 33–58 show a composition bias toward polar residues; the sequence is TSPTNQHNTSHKMTTTEPIHVTTGSG. Basic and acidic residues predominate over residues 59–68; sequence ESRDHTEPRH. The 146-residue stretch at 82–227 folds into the Flavodoxin-like domain; it reads ITIAYATETG…MYNEWQARFC (146 aa). Residues 88–93, 136–139, 174–183, and Asp-209 each bind FMN; these read TETGNA, STTG, and LGDSSYPRFN. Residues 277-543 form the FAD-binding FR-type domain; it reads KDVLQGTVVG…KHSTPIPDLD (267 aa). Residues Arg-453, 483-486, and 515-518 contribute to the FAD site; these read RLFS and GVLT. NADP(+) contacts are provided by residues Thr-554, 607 to 608, and 613 to 617; these read SR and GGYVQ. Trp-688 contributes to the FAD binding site.

This sequence belongs to the NADPH-dependent diflavin oxidoreductase NDOR1 family. The protein in the N-terminal section; belongs to the flavodoxin family. In the C-terminal section; belongs to the flavoprotein pyridine nucleotide cytochrome reductase family. Interacts with DRE2; as part of the cytosolic iron-sulfur (Fe-S) protein assembly (CIA) machinery. The cofactor is FAD. It depends on FMN as a cofactor.

It is found in the cytoplasm. The protein resides in the mitochondrion. The enzyme catalyses 2 oxidized [2Fe-2S]-[protein] + NADPH = 2 reduced [2Fe-2S]-[protein] + NADP(+) + H(+). NADPH-dependent reductase which is a central component of the cytosolic iron-sulfur (Fe-S) protein assembly (CIA) machinery. Transfers electrons from NADPH via its FAD and FMN prosthetic groups to the [2Fe-2S] cluster of DRE2, another key component of the CIA machinery. In turn, this reduced cluster provides electrons for assembly of cytosolic iron-sulfur cluster proteins. Positively controls H(2)O(2)-induced cell death. In Yarrowia lipolytica (strain CLIB 122 / E 150) (Yeast), this protein is NADPH-dependent diflavin oxidoreductase 1.